A 150-amino-acid polypeptide reads, in one-letter code: Urease accessory protein UreE (150 aa).

Belongs to the UreE family.

Its subcellular location is the cytoplasm. In terms of biological role, involved in urease metallocenter assembly. Binds nickel. Probably functions as a nickel donor during metallocenter assembly. The sequence is that of Urease accessory protein UreE from Parasynechococcus marenigrum (strain WH8102).